The chain runs to 923 residues: Hexokinase-3 (923 aa).

Residues 1 to 18 (MDSIGSSGLRQGEETLSC) are compositionally biased toward polar residues. The tract at residues 1-30 (MDSIGSSGLRQGEETLSCSEEGLPGPSDSS) is disordered. 2 Hexokinase domains span residues 27 to 471 (SDSS…MVTA) and 477 to 912 (AAHR…LVTA). Residues 84-220 (HGTEQGDFVV…AYNIDVVAVV (137 aa)) are hexokinase small subdomain 1. Residue 95–102 (ELGATGAS) coordinates ATP. Position 95–104 (95–104 (ELGATGASLR)) interacts with D-glucose 6-phosphate. D-glucose-binding positions include Ser168, 185-186 (TK), and 221-222 (ND). The interval 221–460 (NDTVGTMMGC…CDVSLIPSVD (240 aa)) is hexokinase large subdomain 1. D-glucose 6-phosphate contacts are provided by Asp222 and Thr245. Residues Asn248, Glu273, and 304 to 307 (QRFE) each bind D-glucose. 426 to 428 (GGR) provides a ligand contact to D-glucose 6-phosphate. ATP contacts are provided by residues 438-439 (SV) and 542-547 (DLGGTN). Residues 531-661 (DGSERGDFLA…AVELNVVAIV (131 aa)) are hexokinase small subdomain 2. Residue 542–546 (DLGGT) coordinates D-glucose 6-phosphate. Residues 609–610 (SF), 626–627 (TK), and 662–663 (ND) each bind D-glucose. A hexokinase large subdomain 2 region spans residues 662 to 901 (NDTVGTMMSC…CVVTFLQSED (240 aa)). D-glucose 6-phosphate is bound by residues Asp663 and Thr686. Position 686 (Thr686) interacts with ATP. D-glucose contacts are provided by residues 688–689 (TN), Glu714, and Glu748. Residues 753 to 754 (GM), 790 to 794 (TKFLS), and 869 to 873 (TLYKL) each bind ATP. D-glucose 6-phosphate contacts are provided by residues 867–869 (DGT) and Ser903.

This sequence belongs to the hexokinase family.

It carries out the reaction a D-hexose + ATP = a D-hexose 6-phosphate + ADP + H(+). The enzyme catalyses D-fructose + ATP = D-fructose 6-phosphate + ADP + H(+). It catalyses the reaction D-glucose + ATP = D-glucose 6-phosphate + ADP + H(+). It functions in the pathway carbohydrate metabolism; hexose metabolism. The protein operates within carbohydrate degradation; glycolysis; D-glyceraldehyde 3-phosphate and glycerone phosphate from D-glucose: step 1/4. Hexokinase is an allosteric enzyme inhibited by its product D-glucose 6-phosphate. In terms of biological role, catalyzes the phosphorylation of hexose, such as D-glucose and D-fructose, to hexose 6-phosphate (D-glucose 6-phosphate and D-fructose 6-phosphate, respectively). Mediates the initial step of glycolysis by catalyzing phosphorylation of D-glucose to D-glucose 6-phosphate. This is Hexokinase-3 from Homo sapiens (Human).